Here is a 316-residue protein sequence, read N- to C-terminus: Protoheme IX farnesyltransferase (316 aa).

9 consecutive transmembrane segments (helical) span residues 32–52, 53–73, 93–113, 116–136, 152–172, 180–200, 226–246, 248–268, and 289–309; these read VMSLVVFTAFAGLVLAPGQIN, PVLGLIAILCIAVGAGASGAL, IPAGRIAPSEALAFGLVLSCF, AILGLAVNWLSAGILAFTIFF, NIVIGGAAGAFPPMIGWACVT, TVLFLIIFLWTPAHFWALALF, IVAYAVLTAICAVLPSYLGFA, FAYGLVAAALGAIFIYCSIAV, and IFYLFAIFSALMIDRLAAMLV.

The protein belongs to the UbiA prenyltransferase family. Protoheme IX farnesyltransferase subfamily.

It localises to the cell inner membrane. The enzyme catalyses heme b + (2E,6E)-farnesyl diphosphate + H2O = Fe(II)-heme o + diphosphate. The protein operates within porphyrin-containing compound metabolism; heme O biosynthesis; heme O from protoheme: step 1/1. Converts heme B (protoheme IX) to heme O by substitution of the vinyl group on carbon 2 of heme B porphyrin ring with a hydroxyethyl farnesyl side group. This chain is Protoheme IX farnesyltransferase, found in Rhizobium etli (strain CIAT 652).